The primary structure comprises 419 residues: L-rhamnose isomerase (419 aa).

The Mn(2+) site is built by His-262, Asp-294, and Asp-296.

This sequence belongs to the rhamnose isomerase family. Homotetramer. Mn(2+) is required as a cofactor.

Its subcellular location is the cytoplasm. It carries out the reaction L-rhamnopyranose = L-rhamnulose. It participates in carbohydrate degradation; L-rhamnose degradation; glycerone phosphate from L-rhamnose: step 1/3. Its function is as follows. Catalyzes the interconversion of L-rhamnose and L-rhamnulose. The protein is L-rhamnose isomerase of Klebsiella pneumoniae (strain 342).